Consider the following 268-residue polypeptide: Homeobox protein Hox-D12 (268 aa).

Residues 102-124 (TPDAPTASEERSRTRPPFAPESS) form a disordered region. The homeobox DNA-binding region spans 200-259 (ARKKRKPYTKQQIAELENEFLVNEFINRQKRKELSNRLNLSDQQVKIWFQNRRMKKKRVV).

Belongs to the Abd-B homeobox family.

The protein localises to the nucleus. Sequence-specific transcription factor which is part of a developmental regulatory system that provides cells with specific positional identities on the anterior-posterior axis. The protein is Homeobox protein Hox-D12 (Hoxd12) of Mus musculus (Mouse).